The primary structure comprises 359 residues: 3-dehydroquinate synthase (359 aa).

Residues 71 to 76, 105 to 109, 129 to 130, lysine 142, and lysine 151 each bind NAD(+); these read DGEAYK, GVVGD, and TT. The Zn(2+) site is built by glutamate 184, histidine 247, and histidine 264.

The protein belongs to the sugar phosphate cyclases superfamily. Dehydroquinate synthase family. Co(2+) is required as a cofactor. The cofactor is Zn(2+). Requires NAD(+) as cofactor.

The protein localises to the cytoplasm. The catalysed reaction is 7-phospho-2-dehydro-3-deoxy-D-arabino-heptonate = 3-dehydroquinate + phosphate. Its pathway is metabolic intermediate biosynthesis; chorismate biosynthesis; chorismate from D-erythrose 4-phosphate and phosphoenolpyruvate: step 2/7. In terms of biological role, catalyzes the conversion of 3-deoxy-D-arabino-heptulosonate 7-phosphate (DAHP) to dehydroquinate (DHQ). This chain is 3-dehydroquinate synthase, found in Burkholderia cenocepacia (strain ATCC BAA-245 / DSM 16553 / LMG 16656 / NCTC 13227 / J2315 / CF5610) (Burkholderia cepacia (strain J2315)).